The primary structure comprises 137 residues: Large ribosomal subunit protein uL16c (137 aa).

The segment at 1–21 (MLSPKRTKFRRHHRGRMKGKA) is disordered.

The protein belongs to the universal ribosomal protein uL16 family. Part of the 50S ribosomal subunit.

It is found in the plastid. It localises to the chloroplast. This is Large ribosomal subunit protein uL16c from Tupiella akineta (Green alga).